Here is a 36-residue protein sequence, read N- to C-terminus: uncharacterized protein (36 aa).

This is an uncharacterized protein from Escherichia coli (strain K12).